The following is a 29-amino-acid chain: Pyridoxal 5'-phosphate synthase subunit PdxS (29 aa).

The protein belongs to the PdxS/SNZ family. In the presence of PdxT, forms a dodecamer of heterodimers.

It catalyses the reaction aldehydo-D-ribose 5-phosphate + D-glyceraldehyde 3-phosphate + L-glutamine = pyridoxal 5'-phosphate + L-glutamate + phosphate + 3 H2O + H(+). It participates in cofactor biosynthesis; pyridoxal 5'-phosphate biosynthesis. Functionally, catalyzes the formation of pyridoxal 5'-phosphate from ribose 5-phosphate (RBP), glyceraldehyde 3-phosphate (G3P) and ammonia. The ammonia is provided by the PdxT subunit. Can also use ribulose 5-phosphate and dihydroxyacetone phosphate as substrates, resulting from enzyme-catalyzed isomerization of RBP and G3P, respectively. This is Pyridoxal 5'-phosphate synthase subunit PdxS from Clostridium pasteurianum.